Reading from the N-terminus, the 353-residue chain is Nicotinate-nucleotide--dimethylbenzimidazole phosphoribosyltransferase (353 aa).

E320 serves as the catalytic Proton acceptor.

Belongs to the CobT family.

The catalysed reaction is 5,6-dimethylbenzimidazole + nicotinate beta-D-ribonucleotide = alpha-ribazole 5'-phosphate + nicotinate + H(+). Its pathway is nucleoside biosynthesis; alpha-ribazole biosynthesis; alpha-ribazole from 5,6-dimethylbenzimidazole: step 1/2. Functionally, catalyzes the synthesis of alpha-ribazole-5'-phosphate from nicotinate mononucleotide (NAMN) and 5,6-dimethylbenzimidazole (DMB). The chain is Nicotinate-nucleotide--dimethylbenzimidazole phosphoribosyltransferase from Pseudoalteromonas translucida (strain TAC 125).